The primary structure comprises 225 residues: MGQKVNPNGFRYGVTKKHNTLWYADKKDFADILLQDDKIYRFFNKFTREYLIGKVEIRRNQNGHLSVLVHSAKPGAILGQNGENINKLTQDIQKLLRNKELKLNIEVVNIKNPDLNAIILAEQIAIKLENRAPFRVAQKFAIRNAMKSGAKGIKTQVSGRLNGVDMARSEGYSEGEMKLHTLRQDVDFAMATARTTYGAIGVKVWVSKGEFLDGNGEKNVTTEKN.

A KH type-2 domain is found at 39–109; that stretch reads IYRFFNKFTR…ELKLNIEVVN (71 aa).

This sequence belongs to the universal ribosomal protein uS3 family. In terms of assembly, part of the 30S ribosomal subunit. Forms a tight complex with proteins S10 and S14.

Binds the lower part of the 30S subunit head. Binds mRNA in the 70S ribosome, positioning it for translation. The protein is Small ribosomal subunit protein uS3 of Mycoplasma mobile (strain ATCC 43663 / 163K / NCTC 11711) (Mesomycoplasma mobile).